We begin with the raw amino-acid sequence, 434 residues long: Methylenetetrahydrofolate--tRNA-(uracil-5-)-methyltransferase TrmFO (434 aa).

10 to 15 (GAGLAG) contributes to the FAD binding site.

This sequence belongs to the MnmG family. TrmFO subfamily. The cofactor is FAD.

It localises to the cytoplasm. The catalysed reaction is uridine(54) in tRNA + (6R)-5,10-methylene-5,6,7,8-tetrahydrofolate + NADH + H(+) = 5-methyluridine(54) in tRNA + (6S)-5,6,7,8-tetrahydrofolate + NAD(+). It carries out the reaction uridine(54) in tRNA + (6R)-5,10-methylene-5,6,7,8-tetrahydrofolate + NADPH + H(+) = 5-methyluridine(54) in tRNA + (6S)-5,6,7,8-tetrahydrofolate + NADP(+). Its function is as follows. Catalyzes the folate-dependent formation of 5-methyl-uridine at position 54 (M-5-U54) in all tRNAs. The sequence is that of Methylenetetrahydrofolate--tRNA-(uracil-5-)-methyltransferase TrmFO from Bacillus cereus (strain Q1).